The sequence spans 209 residues: Ion-translocating oxidoreductase complex subunit G (209 aa).

A helical membrane pass occupies residues 9–29 (GLVLAIFACASTGLVAVTHYL). Threonine 175 is subject to FMN phosphoryl threonine.

It belongs to the RnfG family. In terms of assembly, the complex is composed of six subunits: RnfA, RnfB, RnfC, RnfD, RnfE and RnfG. The cofactor is FMN.

The protein resides in the cell inner membrane. Functionally, part of a membrane-bound complex that couples electron transfer with translocation of ions across the membrane. This is Ion-translocating oxidoreductase complex subunit G from Vibrio atlanticus (strain LGP32) (Vibrio splendidus (strain Mel32)).